The sequence spans 771 residues: Rho guanine nucleotide exchange factor 6 (771 aa).

The 111-residue stretch at 1–111 (MNPEERLVTW…TLLAVNKATE (111 aa)) folds into the Calponin-homology (CH) domain. Positions 115–157 (SERPCGRSSSLSAATSSQTNPQVAVPSTAPEQHSEEKAEMTEN) are disordered. The span at 122–131 (SSSLSAATSS) shows a compositional bias: low complexity. Ser126 carries the phosphoserine modification. Thr133 is subject to Phosphothreonine. In terms of domain architecture, SH3 spans 159–218 (SHQLIVKARFNFKQTNEDELSVCKGDIIYVTRVEEGGWWEGTLNGRTGWFPSNYVREIKP). Ser224 carries the phosphoserine modification. Residues 240–420 (YYTVVLQNIL…KTLMGQCQDL (181 aa)) enclose the DH domain. The PH domain maps to 442 to 547 (DIKTLGNVIF…WMEQLNRLTK (106 aa)). At Ser487 the chain carries Phosphoserine. A compositionally biased stretch (low complexity) spans 556–572 (SKTSSSSCSTHSSFSST). Residues 556 to 580 (SKTSSSSCSTHSSFSSTGQPRGPLE) are disordered. Ser639 and Ser679 each carry phosphoserine.

As to quaternary structure, interacts with PAK kinases through the SH3 domain. Interacts with GIT1. Component of cytoplasmic complexes, which also contain PXN, GIT1 and PAK1. Interacts with BIN2. Identified in a complex with BIN2 and GIT2. Interacts with PARVB. Interacts with PARVG; the guanine nucleotide exchange factor activity of ARHGEF6 is essential for PARVG-induced enhancement of cell spreading. In terms of tissue distribution, detected in adult heart, spleen, lung, skeletal muscle, kidney and testis. Detected throughout embryogenesis.

Its subcellular location is the cell projection. It localises to the lamellipodium. In terms of biological role, acts as a RAC1 guanine nucleotide exchange factor (GEF). The chain is Rho guanine nucleotide exchange factor 6 (Arhgef6) from Mus musculus (Mouse).